Consider the following 878-residue polypeptide: Alanine--tRNA ligase (878 aa).

Residues His567, His571, Cys669, and His673 each contribute to the Zn(2+) site.

Belongs to the class-II aminoacyl-tRNA synthetase family. Zn(2+) is required as a cofactor.

It is found in the cytoplasm. The catalysed reaction is tRNA(Ala) + L-alanine + ATP = L-alanyl-tRNA(Ala) + AMP + diphosphate. Functionally, catalyzes the attachment of alanine to tRNA(Ala) in a two-step reaction: alanine is first activated by ATP to form Ala-AMP and then transferred to the acceptor end of tRNA(Ala). Also edits incorrectly charged Ser-tRNA(Ala) and Gly-tRNA(Ala) via its editing domain. This is Alanine--tRNA ligase from Rickettsia canadensis (strain McKiel).